We begin with the raw amino-acid sequence, 87 residues long: Translation initiation factor IF-1 2 (87 aa).

In terms of domain architecture, S1-like spans 1-72 (MAKEELIELN…TKGRINFRHK (72 aa)). A disordered region spans residues 66–87 (RINFRHKDERSGPPSRPPQHRR).

Belongs to the IF-1 family. Component of the 30S ribosomal translation pre-initiation complex which assembles on the 30S ribosome in the order IF-2 and IF-3, IF-1 and N-formylmethionyl-tRNA(fMet); mRNA recruitment can occur at any time during PIC assembly.

The protein localises to the cytoplasm. Functionally, one of the essential components for the initiation of protein synthesis. Stabilizes the binding of IF-2 and IF-3 on the 30S subunit to which N-formylmethionyl-tRNA(fMet) subsequently binds. Helps modulate mRNA selection, yielding the 30S pre-initiation complex (PIC). Upon addition of the 50S ribosomal subunit IF-1, IF-2 and IF-3 are released leaving the mature 70S translation initiation complex. The sequence is that of Translation initiation factor IF-1 2 from Bordetella parapertussis (strain 12822 / ATCC BAA-587 / NCTC 13253).